A 1384-amino-acid chain; its full sequence is DNA-directed RNA polymerase subunit beta'' (1384 aa).

The Zn(2+) site is built by cysteine 224, cysteine 297, cysteine 304, and cysteine 307.

Belongs to the RNA polymerase beta' chain family. RpoC2 subfamily. As to quaternary structure, in plastids the minimal PEP RNA polymerase catalytic core is composed of four subunits: alpha, beta, beta', and beta''. When a (nuclear-encoded) sigma factor is associated with the core the holoenzyme is formed, which can initiate transcription. It depends on Zn(2+) as a cofactor.

It is found in the plastid. The protein resides in the chloroplast. It carries out the reaction RNA(n) + a ribonucleoside 5'-triphosphate = RNA(n+1) + diphosphate. Functionally, DNA-dependent RNA polymerase catalyzes the transcription of DNA into RNA using the four ribonucleoside triphosphates as substrates. This Sinapis alba (White mustard) protein is DNA-directed RNA polymerase subunit beta''.